Consider the following 214-residue polypeptide: dITP/XTP pyrophosphatase (214 aa).

Residue 13–18 coordinates substrate; the sequence is SHNAGK. Positions 45 and 74 each coordinate Mg(2+). Asp-74 acts as the Proton acceptor in catalysis. Substrate-binding positions include Ser-75, 163 to 166, Lys-186, and 199 to 200; these read FGYD and HR.

Belongs to the HAM1 NTPase family. As to quaternary structure, homodimer. It depends on Mg(2+) as a cofactor.

It carries out the reaction XTP + H2O = XMP + diphosphate + H(+). It catalyses the reaction dITP + H2O = dIMP + diphosphate + H(+). The catalysed reaction is ITP + H2O = IMP + diphosphate + H(+). Pyrophosphatase that catalyzes the hydrolysis of nucleoside triphosphates to their monophosphate derivatives, with a high preference for the non-canonical purine nucleotides XTP (xanthosine triphosphate), dITP (deoxyinosine triphosphate) and ITP. Seems to function as a house-cleaning enzyme that removes non-canonical purine nucleotides from the nucleotide pool, thus preventing their incorporation into DNA/RNA and avoiding chromosomal lesions. The chain is dITP/XTP pyrophosphatase from Rhizobium meliloti (strain 1021) (Ensifer meliloti).